The sequence spans 159 residues: Dihydrofolate reductase (159 aa).

In terms of domain architecture, DHFR spans 2-157 (TLSILVAHDL…IPHTFLHLIR (156 aa)). A substrate-binding site is contributed by 6–8 (LVA). NADP(+) contacts are provided by residues 7–8 (VA) and 15–20 (IGFENQ). Asp-28 provides a ligand contact to substrate. Residue 44-47 (GRKT) coordinates NADP(+). Arg-58 serves as a coordination point for substrate. Residues 63 to 66 (LTSD) and 93 to 98 (FGGQTL) contribute to the NADP(+) site. Residue Thr-112 participates in substrate binding.

This sequence belongs to the dihydrofolate reductase family.

It carries out the reaction (6S)-5,6,7,8-tetrahydrofolate + NADP(+) = 7,8-dihydrofolate + NADPH + H(+). It functions in the pathway cofactor biosynthesis; tetrahydrofolate biosynthesis; 5,6,7,8-tetrahydrofolate from 7,8-dihydrofolate: step 1/1. Its function is as follows. Key enzyme in folate metabolism. Catalyzes an essential reaction for de novo glycine and purine synthesis, and for DNA precursor synthesis. The sequence is that of Dihydrofolate reductase (folA) from Staphylococcus aureus (strain COL).